Reading from the N-terminus, the 637-residue chain is DNA gyrase subunit B (637 aa).

The 115-residue stretch at 420–534 (CEIYIVEGDS…EGHVFIAQPP (115 aa)) folds into the Toprim domain. Mg(2+)-binding residues include Glu426, Asp499, and Asp501.

Belongs to the type II topoisomerase GyrB family. As to quaternary structure, heterotetramer, composed of two GyrA and two GyrB chains. In the heterotetramer, GyrA contains the active site tyrosine that forms a transient covalent intermediate with DNA, while GyrB binds cofactors and catalyzes ATP hydrolysis. It depends on Mg(2+) as a cofactor. Requires Mn(2+) as cofactor. Ca(2+) serves as cofactor.

Its subcellular location is the cytoplasm. It catalyses the reaction ATP-dependent breakage, passage and rejoining of double-stranded DNA.. In terms of biological role, a type II topoisomerase that negatively supercoils closed circular double-stranded (ds) DNA in an ATP-dependent manner to modulate DNA topology and maintain chromosomes in an underwound state. Negative supercoiling favors strand separation, and DNA replication, transcription, recombination and repair, all of which involve strand separation. Also able to catalyze the interconversion of other topological isomers of dsDNA rings, including catenanes and knotted rings. Type II topoisomerases break and join 2 DNA strands simultaneously in an ATP-dependent manner. This Clostridium acetobutylicum (strain ATCC 824 / DSM 792 / JCM 1419 / IAM 19013 / LMG 5710 / NBRC 13948 / NRRL B-527 / VKM B-1787 / 2291 / W) protein is DNA gyrase subunit B.